A 431-amino-acid chain; its full sequence is Enolase (431 aa).

Glutamine 166 provides a ligand contact to (2R)-2-phosphoglycerate. Glutamate 208 acts as the Proton donor in catalysis. Mg(2+) is bound by residues aspartate 245, glutamate 288, and aspartate 315. The (2R)-2-phosphoglycerate site is built by lysine 340, arginine 369, serine 370, and lysine 391. Lysine 340 serves as the catalytic Proton acceptor.

It belongs to the enolase family. Mg(2+) serves as cofactor.

It is found in the cytoplasm. It localises to the secreted. The protein resides in the cell surface. The catalysed reaction is (2R)-2-phosphoglycerate = phosphoenolpyruvate + H2O. It functions in the pathway carbohydrate degradation; glycolysis; pyruvate from D-glyceraldehyde 3-phosphate: step 4/5. In terms of biological role, catalyzes the reversible conversion of 2-phosphoglycerate (2-PG) into phosphoenolpyruvate (PEP). It is essential for the degradation of carbohydrates via glycolysis. The protein is Enolase of Clostridium botulinum (strain Eklund 17B / Type B).